Here is a 525-residue protein sequence, read N- to C-terminus: Glutamate--cysteine ligase (525 aa).

Belongs to the glutamate--cysteine ligase type 1 family. Type 1 subfamily.

It catalyses the reaction L-cysteine + L-glutamate + ATP = gamma-L-glutamyl-L-cysteine + ADP + phosphate + H(+). The protein operates within sulfur metabolism; glutathione biosynthesis; glutathione from L-cysteine and L-glutamate: step 1/2. The polypeptide is Glutamate--cysteine ligase (Pseudoalteromonas translucida (strain TAC 125)).